The primary structure comprises 110 residues: Hydrogenase maturation factor HypA (110 aa).

His-2 is a binding site for Ni(2+). Zn(2+) is bound by residues Cys-70, Cys-73, Cys-86, and Cys-89.

It belongs to the HypA/HybF family.

Functionally, involved in the maturation of [NiFe] hydrogenases. Required for nickel insertion into the metal center of the hydrogenase. This chain is Hydrogenase maturation factor HypA, found in Geobacter sp. (strain M21).